Reading from the N-terminus, the 211-residue chain is Superoxide dismutase [Fe] (211 aa).

4 residues coordinate Fe cation: histidine 34, histidine 85, aspartate 171, and histidine 175.

It belongs to the iron/manganese superoxide dismutase family. Fe cation is required as a cofactor.

It carries out the reaction 2 superoxide + 2 H(+) = H2O2 + O2. In terms of biological role, destroys superoxide anion radicals which are normally produced within the cells and which are toxic to biological systems. This is Superoxide dismutase [Fe] (sod) from Acidianus ambivalens (Desulfurolobus ambivalens).